The primary structure comprises 439 residues: uncharacterized protein (439 aa).

Positions 65–208 constitute a DAGKc domain; that stretch reads TRPKRVFVLV…VYAFELTTEG (144 aa).

This is an uncharacterized protein from Caenorhabditis elegans.